We begin with the raw amino-acid sequence, 217 residues long: Protein-L-isoaspartate O-methyltransferase 2 (217 aa).

The active site involves serine 62.

This sequence belongs to the methyltransferase superfamily. L-isoaspartyl/D-aspartyl protein methyltransferase family.

Its subcellular location is the cytoplasm. It carries out the reaction [protein]-L-isoaspartate + S-adenosyl-L-methionine = [protein]-L-isoaspartate alpha-methyl ester + S-adenosyl-L-homocysteine. In terms of biological role, catalyzes the methyl esterification of L-isoaspartyl residues in peptides and proteins that result from spontaneous decomposition of normal L-aspartyl and L-asparaginyl residues. It plays a role in the repair and/or degradation of damaged proteins. The protein is Protein-L-isoaspartate O-methyltransferase 2 of Geotalea uraniireducens (strain Rf4) (Geobacter uraniireducens).